An 88-amino-acid chain; its full sequence is Putative membrane protein insertion efficiency factor (88 aa).

The protein belongs to the UPF0161 family.

The protein localises to the cell inner membrane. Its function is as follows. Could be involved in insertion of integral membrane proteins into the membrane. The protein is Putative membrane protein insertion efficiency factor of Prochlorococcus marinus (strain MIT 9313).